Consider the following 460-residue polypeptide: MTNYAIILAAGKGTRMTSDLPKVLHKVSGLTMLEHVFRSVKAISPEKSVTVIGHKSEMVRAVLADQSAFVHQTEQLGTGHAVMMAETQLEGLEGHTLVIAGDTPLITGESLKSLIDFHVNHKNVATILTATAQDPFGYGRIVRNKDGEVIKIVEQKDANEYEQQLKEINTGTYVFDNKRLFEALKCITTNNAQGEYYLTDVVTIFRANKEKVGAYILRDFNESLGVNDRVALATAETVMRQRITQKHMVNGVTFQNPETVYIESDVEIAPDVLIEGNVTLKGRTHIGSGTVLTNGTYIVDSEIGDNCVVTNSMIESSVLAAGVTVGPYAHLRPGTTLDREVHIGNFVEVKGSHIGEKTKAGHLTYIGNAQVGSSVNVGAGTITVNYDGQNKYETVIGDHAFIGSNSTLIAPLEVGDHALTAAGSTISKTVPIDSIAIGRSRQVTKEGYAKRLAHHPSRSK.

A pyrophosphorylase region spans residues 1–229 (MTNYAIILAA…FNESLGVNDR (229 aa)). UDP-N-acetyl-alpha-D-glucosamine contacts are provided by residues 8–11 (LAAG), Lys22, Gln72, and 77–78 (GT). Residue Asp102 participates in Mg(2+) binding. Residues Gly139, Glu154, Asn169, and Asn227 each contribute to the UDP-N-acetyl-alpha-D-glucosamine site. Asn227 provides a ligand contact to Mg(2+). Positions 230-250 (VALATAETVMRQRITQKHMVN) are linker. Residues 251 to 460 (GVTFQNPETV…RLAHHPSRSK (210 aa)) form an N-acetyltransferase region. Residues Arg332 and Lys350 each contribute to the UDP-N-acetyl-alpha-D-glucosamine site. The active-site Proton acceptor is the His362. Residues Tyr365 and Asn376 each contribute to the UDP-N-acetyl-alpha-D-glucosamine site. Acetyl-CoA contacts are provided by residues Ala379, 385 to 386 (NY), Ser404, Ala422, and Arg439.

This sequence in the N-terminal section; belongs to the N-acetylglucosamine-1-phosphate uridyltransferase family. The protein in the C-terminal section; belongs to the transferase hexapeptide repeat family. In terms of assembly, homotrimer. Mg(2+) is required as a cofactor.

Its subcellular location is the cytoplasm. It catalyses the reaction alpha-D-glucosamine 1-phosphate + acetyl-CoA = N-acetyl-alpha-D-glucosamine 1-phosphate + CoA + H(+). The catalysed reaction is N-acetyl-alpha-D-glucosamine 1-phosphate + UTP + H(+) = UDP-N-acetyl-alpha-D-glucosamine + diphosphate. Its pathway is nucleotide-sugar biosynthesis; UDP-N-acetyl-alpha-D-glucosamine biosynthesis; N-acetyl-alpha-D-glucosamine 1-phosphate from alpha-D-glucosamine 6-phosphate (route II): step 2/2. It functions in the pathway nucleotide-sugar biosynthesis; UDP-N-acetyl-alpha-D-glucosamine biosynthesis; UDP-N-acetyl-alpha-D-glucosamine from N-acetyl-alpha-D-glucosamine 1-phosphate: step 1/1. The protein operates within bacterial outer membrane biogenesis; LPS lipid A biosynthesis. In terms of biological role, catalyzes the last two sequential reactions in the de novo biosynthetic pathway for UDP-N-acetylglucosamine (UDP-GlcNAc). The C-terminal domain catalyzes the transfer of acetyl group from acetyl coenzyme A to glucosamine-1-phosphate (GlcN-1-P) to produce N-acetylglucosamine-1-phosphate (GlcNAc-1-P), which is converted into UDP-GlcNAc by the transfer of uridine 5-monophosphate (from uridine 5-triphosphate), a reaction catalyzed by the N-terminal domain. This is Bifunctional protein GlmU from Streptococcus pyogenes serotype M28 (strain MGAS6180).